The primary structure comprises 643 residues: Macrolide export ATP-binding/permease protein MacB (643 aa).

Positions 6-244 constitute an ABC transporter domain; sequence IELKGVSRVF…QVRSPFGVRH (239 aa). An ATP-binding site is contributed by 42-49; sequence GASGSGKS. The next 4 helical transmembrane spans lie at 270–290, 518–538, 569–589, and 606–626; these read VLTL…LAIG, LTIL…IGVM, FLIE…VIGL, and LMPI…FGYL.

Belongs to the ABC transporter superfamily. Macrolide exporter (TC 3.A.1.122) family. In terms of assembly, homodimer.

It localises to the cell inner membrane. Functionally, non-canonical ABC transporter that contains transmembrane domains (TMD), which form a pore in the inner membrane, and an ATP-binding domain (NBD), which is responsible for energy generation. Confers resistance against macrolides. The polypeptide is Macrolide export ATP-binding/permease protein MacB (Wolinella succinogenes (strain ATCC 29543 / DSM 1740 / CCUG 13145 / JCM 31913 / LMG 7466 / NCTC 11488 / FDC 602W) (Vibrio succinogenes)).